The sequence spans 340 residues: UPF0324 membrane protein OB3406 (340 aa).

A run of 9 helical transmembrane segments spans residues 12–31 (SFYT…GVLC), 36–58 (LDIM…TIGL), 94–116 (GLHA…YSLA), 126–148 (SILT…APLV), 155–177 (TAVS…TMMY), 215–237 (IAIV…IGIY), 257–276 (IPWF…IGFL), 281–303 (VNLL…GLNV), and 315–337 (VFFA…IYVM).

This sequence belongs to the UPF0324 family.

It is found in the cell membrane. In Oceanobacillus iheyensis (strain DSM 14371 / CIP 107618 / JCM 11309 / KCTC 3954 / HTE831), this protein is UPF0324 membrane protein OB3406.